Consider the following 60-residue polypeptide: Large ribosomal subunit protein uL30 (60 aa).

Belongs to the universal ribosomal protein uL30 family. As to quaternary structure, part of the 50S ribosomal subunit.

The sequence is that of Large ribosomal subunit protein uL30 from Limosilactobacillus reuteri (strain DSM 20016) (Lactobacillus reuteri).